We begin with the raw amino-acid sequence, 323 residues long: Ubiquinone biosynthesis protein COQ4, mitochondrial (323 aa).

A mitochondrion-targeting transit peptide spans 1 to 29; it reads MLKSTVSNTRIKCCRIDQRRNYLFTALAS. His-205, Asp-206, His-209, and Glu-221 together coordinate Zn(2+).

The protein belongs to the COQ4 family. As to quaternary structure, component of a multi-subunit COQ enzyme complex, composed of at least COQ3, COQ4, COQ5, COQ6, COQ7 and COQ9. It depends on Zn(2+) as a cofactor.

The protein localises to the mitochondrion inner membrane. It catalyses the reaction a 4-hydroxy-3-methoxy-5-(all-trans-polyprenyl)benzoate + H(+) = a 2-methoxy-6-(all-trans-polyprenyl)phenol + CO2. The protein operates within cofactor biosynthesis; ubiquinone biosynthesis. In terms of biological role, lyase that catalyzes the C1-decarboxylation of 4-hydroxy-3-methoxy-5-(all-trans-polyprenyl)benzoic acid into 2-methoxy-6-(all-trans-polyprenyl)phenol during ubiquinone biosynthesis. The chain is Ubiquinone biosynthesis protein COQ4, mitochondrial from Candida dubliniensis (strain CD36 / ATCC MYA-646 / CBS 7987 / NCPF 3949 / NRRL Y-17841) (Yeast).